The sequence spans 865 residues: Protein translocase subunit SecA (865 aa).

ATP contacts are provided by residues Gln85, 103–107 (GEGKT), and Asp505. Zn(2+) is bound by residues Cys847, Cys849, Cys858, and His859.

Belongs to the SecA family. Monomer and homodimer. Part of the essential Sec protein translocation apparatus which comprises SecA, SecYEG and auxiliary proteins SecDF. Other proteins may also be involved. It depends on Zn(2+) as a cofactor.

It is found in the cell membrane. It localises to the cytoplasm. The catalysed reaction is ATP + H2O + cellular proteinSide 1 = ADP + phosphate + cellular proteinSide 2.. In terms of biological role, part of the Sec protein translocase complex. Interacts with the SecYEG preprotein conducting channel. Has a central role in coupling the hydrolysis of ATP to the transfer of proteins into and across the cell membrane, serving as an ATP-driven molecular motor driving the stepwise translocation of polypeptide chains across the membrane. This Lactococcus lactis subsp. cremoris (strain MG1363) protein is Protein translocase subunit SecA.